The chain runs to 377 residues: Actin depolymerising venom protein gelsolin 1 (377 aa).

An N-terminal signal peptide occupies residues 1-26 (MFRQMKLGSLATKLLLACFLVTCTSG). 3 Gelsolin-like repeats span residues 50–133 (FVPV…SEQF), 174–243 (IRVR…SSTS), and 298–368 (EKPL…PTAF).

As to expression, expressed by the venom gland (posterior main gland) (at protein level).

The protein localises to the secreted. The sequence is that of Actin depolymerising venom protein gelsolin 1 from Platymeris rhadamanthus (Red spot assassin bug).